A 320-amino-acid polypeptide reads, in one-letter code: Ferrochelatase (320 aa).

Fe cation contacts are provided by H194 and E275.

It belongs to the ferrochelatase family. As to quaternary structure, monomer.

Its subcellular location is the cytoplasm. The catalysed reaction is heme b + 2 H(+) = protoporphyrin IX + Fe(2+). It participates in porphyrin-containing compound metabolism; protoheme biosynthesis; protoheme from protoporphyrin-IX: step 1/1. Its function is as follows. Catalyzes the ferrous insertion into protoporphyrin IX. The sequence is that of Ferrochelatase from Escherichia coli (strain SMS-3-5 / SECEC).